The chain runs to 531 residues: MTLTETSLSHNAEEGKDEGGRLQQYKNLTKHEELRRRRTECSVEIRKQKGADMMMKRRNIVDVDEGGNSESELEEPEKISHQQSSTRLSNDEIRAILSNNPSEDDMVRCFESLRKSLSKTKNPPIDEVIHCGLLQALVQALSVENERVQYEAAWALTNIVSGSTEQTIAAVEAGVTIPLIHLSVHQSAQISEQALWAVANIAGDSSQLRDYVIKCHGVEALMHLMEKVDQLGDSHVRTIAWAFSNMCRHKNPHAPLEVLRVLSKGLVKLVQHTDRQVRQDACWAVSYLTDGPDEQIELARESGVLPHVVAFFKEAENLVAPALRTLGNVATGNDSLTQAVIDLGSLDEILPLMEKTRSSSIVKECCWLVSNIIAGTQKQIQAVLDANLLPVLINVLKSGDHKCQFEASWALSNLAQGGTNRQVVAMLEDNVVPALCQALLQTNTDMLNNTLETLYTLMLTVQNGYPHKVDILHDQVEENGGLDSLERLQESQSEQIYTQAYRIITQFFTDDDAGEKESHENADPQDNKWSF.

Positions 1-10 (MTLTETSLSH) are enriched in polar residues. The interval 1–88 (MTLTETSLSH…ISHQQSSTRL (88 aa)) is disordered. An IBB domain is found at 5–67 (ETSLSHNAEE…RNIVDVDEGG (63 aa)). 2 stretches are compositionally biased toward basic and acidic residues: residues 11–20 (NAEEGKDEGG) and 29–50 (TKHE…KQKG). The segment covering 62–75 (DVDEGGNSESELEE) has biased composition (acidic residues). ARM repeat units lie at residues 122-161 (NPPI…NIVS), 164-203 (TEQT…NIAG), 250-290 (KNPH…YLTD), 293-331 (DEQI…NVAT), 334-374 (DSLT…NIIA), 377-416 (QKQI…NLAQ), and 420-459 (NRQV…TLML). A disordered region spans residues 511 to 531 (DDAGEKESHENADPQDNKWSF). A compositionally biased stretch (basic and acidic residues) spans 515–531 (EKESHENADPQDNKWSF).

Belongs to the importin alpha family. As to quaternary structure, forms a complex with an importin beta subunit. Interacts with akir-1. Germline tissues. Expressed exclusively in germ line cells from the early embryonic through adult stages.

The protein localises to the cytoplasm. Its subcellular location is the nucleus. It is found in the nucleus envelope. Functionally, nuclear transport receptor that mediates nuclear import of proteins, and which is involved in sister chromatid cohesion. Binds specifically and directly to substrates containing either a simple or bipartite nuclear localization signals (NLS) motif. Promotes docking of import substrates to the nuclear envelope. Together with akir-1 adapter, required for the import and load of cohesin complex proteins in meiotic nuclei. This is Importin subunit alpha-2 from Caenorhabditis elegans.